Here is a 179-residue protein sequence, read N- to C-terminus: Large ribosomal subunit protein uL16 (179 aa).

Residues 147–179 are disordered; that stretch reads KASSASLANLDEDANSQTDDETSSSGSVATVES. Positions 156-168 are enriched in acidic residues; that stretch reads LDEDANSQTDDET. Polar residues predominate over residues 169–179; it reads SSSGSVATVES.

This sequence belongs to the universal ribosomal protein uL16 family. Part of the 50S ribosomal subunit.

Binds 23S rRNA and is also seen to make contacts with the A and possibly P site tRNAs. This Prochlorococcus marinus (strain MIT 9211) protein is Large ribosomal subunit protein uL16.